The chain runs to 216 residues: Protein shisa-5 (216 aa).

A signal peptide spans 1–26; that stretch reads MAAPAPAPRILVLLLLLLPAPEGAQS. Residues 27 to 93 lie on the Extracellular side of the membrane; sequence ELCMISHGRK…SGFDSDPVAR (67 aa). A helical transmembrane segment spans residues 94–114; sequence FGTVIAIGVTLFVIAVVTVIV. Residues 115–216 lie on the Cytoplasmic side of the membrane; sequence CCTCSCCCLY…AYMEPPKAVP (102 aa).

It belongs to the shisa family. Interacts with PDCD6; PDCD6 can stabilize SHISA5.

The protein resides in the endoplasmic reticulum membrane. It localises to the nucleus membrane. Can induce apoptosis in a caspase-dependent manner and plays a role in p53/TP53-dependent apoptosis. This Bos taurus (Bovine) protein is Protein shisa-5 (SHISA5).